The primary structure comprises 66 residues: MKAADVRALSADQLKEELAKLKKEQFNLRFQKATGQLEKSSRINEVRKDIARIKTIARQKAAEAKA.

It belongs to the universal ribosomal protein uL29 family.

This Rhizobium meliloti (strain 1021) (Ensifer meliloti) protein is Large ribosomal subunit protein uL29.